The sequence spans 304 residues: MNGIIPLWKERGMTSHDCVFKLRKILHTKKVGHTGTLDPEVEGVLPICIGRATKLAEYVTDEGKVYVAEITLGKSTTTEDATGETVATKELAEISAEELQAALTKLTGKITQIPPMFSAVKVNGKKLYEYARAGIEVERPSRQVDIYSLVRLDGVSPLTESNPTFKLEISCGKGTYIRTLAVMIGELLGYPAHMSKLERTRSGFFKKEDCLTLAEIDEKMQANDTDFLYPLEKGIESMAKLEIDEEIHAKVLNGVLLPKSLFQTVENEPRVALIFQEKLTAIYKPHPEKQDLFKPEKVIELQQA.

Catalysis depends on aspartate 38, which acts as the Nucleophile.

This sequence belongs to the pseudouridine synthase TruB family. Type 1 subfamily.

The catalysed reaction is uridine(55) in tRNA = pseudouridine(55) in tRNA. In terms of biological role, responsible for synthesis of pseudouridine from uracil-55 in the psi GC loop of transfer RNAs. The sequence is that of tRNA pseudouridine synthase B from Listeria innocua serovar 6a (strain ATCC BAA-680 / CLIP 11262).